The sequence spans 213 residues: Nicolin-1 (213 aa).

Part of the neuronal tubulin polyglutamylase complex which contains TPGS1, TPGS2, TTLL1, LRRC49 and NICN1.

The protein localises to the nucleus. The protein is Nicolin-1 (NICN1) of Canis lupus familiaris (Dog).